A 128-amino-acid polypeptide reads, in one-letter code: Nitrogen fixation nifHD region GlnB-like protein 2 (128 aa).

This sequence belongs to the P(II) protein family.

Could be involved in the regulation of nitrogen fixation. This is Nitrogen fixation nifHD region GlnB-like protein 2 (glnBB) from Methanothermococcus thermolithotrophicus (Methanococcus thermolithotrophicus).